The chain runs to 495 residues: tRNA(Ile)-lysidine synthase (495 aa).

Residue 26–31 coordinates ATP; the sequence is SGGSDS.

Belongs to the tRNA(Ile)-lysidine synthase family.

It is found in the cytoplasm. It catalyses the reaction cytidine(34) in tRNA(Ile2) + L-lysine + ATP = lysidine(34) in tRNA(Ile2) + AMP + diphosphate + H(+). Ligates lysine onto the cytidine present at position 34 of the AUA codon-specific tRNA(Ile) that contains the anticodon CAU, in an ATP-dependent manner. Cytidine is converted to lysidine, thus changing the amino acid specificity of the tRNA from methionine to isoleucine. The polypeptide is tRNA(Ile)-lysidine synthase (Bartonella tribocorum (strain CIP 105476 / IBS 506)).